The chain runs to 144 residues: Peptide methionine sulfoxide reductase MsrB (144 aa).

Residues 5-128 (KEELRQRIGE…NSAALQFIPV (124 aa)) form the MsrB domain. The active-site Nucleophile is the C117.

The protein belongs to the MsrB Met sulfoxide reductase family.

It catalyses the reaction L-methionyl-[protein] + [thioredoxin]-disulfide + H2O = L-methionyl-(R)-S-oxide-[protein] + [thioredoxin]-dithiol. This is Peptide methionine sulfoxide reductase MsrB from Ligilactobacillus salivarius (strain UCC118) (Lactobacillus salivarius).